Consider the following 248-residue polypeptide: Large ribosomal subunit protein uL4 (248 aa).

Residues Q44–L109 form a disordered region. Basic and acidic residues predominate over residues P92 to L109.

This sequence belongs to the universal ribosomal protein uL4 family. In terms of assembly, part of the 50S ribosomal subunit.

One of the primary rRNA binding proteins, this protein initially binds near the 5'-end of the 23S rRNA. It is important during the early stages of 50S assembly. It makes multiple contacts with different domains of the 23S rRNA in the assembled 50S subunit and ribosome. Functionally, forms part of the polypeptide exit tunnel. The chain is Large ribosomal subunit protein uL4 from Natronomonas pharaonis (strain ATCC 35678 / DSM 2160 / CIP 103997 / JCM 8858 / NBRC 14720 / NCIMB 2260 / Gabara) (Halobacterium pharaonis).